The following is a 300-amino-acid chain: Porphobilinogen deaminase (300 aa).

Cysteine 239 is subject to S-(dipyrrolylmethanemethyl)cysteine.

This sequence belongs to the HMBS family. Monomer. Dipyrromethane serves as cofactor.

The catalysed reaction is 4 porphobilinogen + H2O = hydroxymethylbilane + 4 NH4(+). Its pathway is porphyrin-containing compound metabolism; protoporphyrin-IX biosynthesis; coproporphyrinogen-III from 5-aminolevulinate: step 2/4. Its function is as follows. Tetrapolymerization of the monopyrrole PBG into the hydroxymethylbilane pre-uroporphyrinogen in several discrete steps. The chain is Porphobilinogen deaminase from Francisella tularensis subsp. holarctica (strain FTNF002-00 / FTA).